We begin with the raw amino-acid sequence, 873 residues long: DNA mismatch repair protein MutS (873 aa).

Residue 625–632 (GPNMGGKS) coordinates ATP.

The protein belongs to the DNA mismatch repair MutS family.

In terms of biological role, this protein is involved in the repair of mismatches in DNA. It is possible that it carries out the mismatch recognition step. This protein has a weak ATPase activity. The polypeptide is DNA mismatch repair protein MutS (Xanthomonas campestris pv. campestris (strain 8004)).